The following is a 447-amino-acid chain: Phosphoglucosamine mutase (447 aa).

Serine 107 acts as the Phosphoserine intermediate in catalysis. The Mg(2+) site is built by serine 107, aspartate 246, aspartate 248, and aspartate 250. Position 107 is a phosphoserine (serine 107).

This sequence belongs to the phosphohexose mutase family. The cofactor is Mg(2+). Activated by phosphorylation.

The enzyme catalyses alpha-D-glucosamine 1-phosphate = D-glucosamine 6-phosphate. Catalyzes the conversion of glucosamine-6-phosphate to glucosamine-1-phosphate. This Ralstonia pickettii (strain 12J) protein is Phosphoglucosamine mutase.